The sequence spans 614 residues: Zinc metalloproteinase-disintegrin-like VLAIP-B (614 aa).

Residues 1 to 20 form the signal peptide; sequence MMQVLLVTICLAVFPYQGSS. A propeptide spanning residues 21-193 is cleaved from the precursor; the sequence is IILESGNVND…KASQLNLTPE (173 aa). A Pyrrolidone carboxylic acid modification is found at Gln194. The region spanning 202–398 is the Peptidase M12B domain; the sequence is KYVELVIVAD…KMPQCILNKP (197 aa). Glu205 serves as a coordination point for Ca(2+). An N-linked (GlcNAc...) asparagine glycan is attached at Asn262. Residue Asp289 coordinates Ca(2+). Cystine bridges form between Cys313/Cys393, Cys353/Cys377, and Cys355/Cys360. A Zn(2+)-binding site is contributed by His338. Glu339 is a catalytic residue. Zn(2+)-binding residues include His342 and His348. Cys393, Asn396, Val408, Asn411, Phe413, Glu415, Glu418, and Asp421 together coordinate Ca(2+). The region spanning 406–492 is the Disintegrin domain; that stretch reads PAVCGNYFVE…ECPTDQFQRN (87 aa). 14 disulfides stabilise this stretch: Cys409-Cys438, Cys420-Cys433, Cys422-Cys428, Cys432-Cys455, Cys446-Cys452, Cys451-Cys477, Cys464-Cys484, Cys471-Cys503, Cys496-Cys508, Cys515-Cys565, Cys530-Cys576, Cys543-Cys553, Cys560-Cys602, and Cys596-Cys607. Positions 470–472 match the D/ECD-tripeptide motif; sequence ECD. Asn505, Asn547, and Asn568 each carry an N-linked (GlcNAc...) asparagine glycan.

Belongs to the venom metalloproteinase (M12B) family. P-III subfamily. P-IIIc sub-subfamily. Heterodimer; disulfide-linked. The cofactor is Zn(2+). The N-terminus is blocked. In terms of tissue distribution, expressed by the venom gland.

It localises to the secreted. With respect to regulation, inhibited by EDTA or 1,10-phenanthroline. Not inhibited by PMSF. In terms of biological role, this metalloproteinase hydrolyzes azocasein, and insulin B-chain (at the '38-Ala-|-Leu-39' bond). Also hydrolyzes the Aalpha-chain (FGA) and more slowly the Bbeta-chain of fibrinogen (FGB), without affecting the gamma-chain. Cleaves alpha-chain of fibrinogen at '432-Lys-|-Leu-433' and '535-Pro-|-Met-536' bonds. Does not cleave fibrin. Inhibits endothelial cell adhesion to extracellular matrix proteins such as fibrinogen, fibronectin, vitronectin, collagen I, and collagen IV. Induces apoptosis in vascular endothelial cells. The chain is Zinc metalloproteinase-disintegrin-like VLAIP-B from Macrovipera lebetinus (Levantine viper).